Consider the following 1019-residue polypeptide: Insulin-degrading enzyme (1019 aa).

Residue His108 participates in Zn(2+) binding. Glu111 acts as the Proton acceptor in catalysis. The Zn(2+) site is built by His112 and Glu189. An N6-succinyllysine modification is found at Lys192. Residues 336–342 (HLIGHEG) and 359–363 (LVGGQ) contribute to the substrate site. An ATP-binding site is contributed by Arg429. Lys697 is subject to N6-succinyllysine. The SlyX motif signature appears at 853-858 (EKPPHY). 895 to 901 (DKPKKLS) is a binding site for ATP.

It belongs to the peptidase M16 family. Homodimer. Can also form homotetramers. In terms of assembly, (Microbial infection) Interacts (via N-terminus) with varicella-zoster virus (VZV) envelope glycoprotein E (via N-terminus); the membrane-associated isoform may function as an entry receptor for this virus. The cofactor is Zn(2+). Post-translationally, the N-terminus is blocked. Detected in brain and in cerebrospinal fluid (at protein level).

The protein resides in the cytoplasm. It localises to the cytosol. The protein localises to the cell membrane. It is found in the secreted. It catalyses the reaction Degradation of insulin, glucagon and other polypeptides. No action on proteins.. With respect to regulation, activated by small peptides. Activated by ATP and GTP, and to a lesser extent by CTP, TTP and PPPi. Inhibited by bacitracin. In vitro modification of Cys residues impairs enzyme activity. In terms of biological role, plays a role in the cellular breakdown of insulin, APP peptides, IAPP peptides, natriuretic peptides, glucagon, bradykinin, kallidin, and other peptides, and thereby plays a role in intercellular peptide signaling. Substrate binding induces important conformation changes, making it possible to bind and degrade larger substrates, such as insulin. Contributes to the regulation of peptide hormone signaling cascades and regulation of blood glucose homeostasis via its role in the degradation of insulin, glucagon and IAPP. Plays a role in the degradation and clearance of APP-derived amyloidogenic peptides that are secreted by neurons and microglia. Degrades the natriuretic peptides ANP, BNP and CNP, inactivating their ability to raise intracellular cGMP. Also degrades an aberrant frameshifted 40-residue form of NPPA (fsNPPA) which is associated with familial atrial fibrillation in heterozygous patients. Involved in antigen processing. Produces both the N terminus and the C terminus of MAGEA3-derived antigenic peptide (EVDPIGHLY) that is presented to cytotoxic T lymphocytes by MHC class I. (Microbial infection) The membrane-associated isoform acts as an entry receptor for varicella-zoster virus (VZV). In Homo sapiens (Human), this protein is Insulin-degrading enzyme.